We begin with the raw amino-acid sequence, 289 residues long: Probable acetolactate synthase small subunit (289 aa).

Ser-34 carries the post-translational modification Phosphoserine. The region spanning 72–149 (VFNCLVQNEP…AVLDYTGTSM (78 aa)) is the ACT domain.

This sequence belongs to the acetolactate synthase small subunit family.

It localises to the cytoplasm. Its pathway is amino-acid biosynthesis; L-isoleucine biosynthesis; L-isoleucine from 2-oxobutanoate: step 1/4. It participates in amino-acid biosynthesis; L-valine biosynthesis; L-valine from pyruvate: step 1/4. Stimulates activity of the acetolactate synthase catalytic subunit ilv1. The sequence is that of Probable acetolactate synthase small subunit from Schizosaccharomyces pombe (strain 972 / ATCC 24843) (Fission yeast).